The primary structure comprises 473 residues: Probable transporter MCH2 (473 aa).

At 1–37 the chain is on the cytoplasmic side; sequence MSEERHEDHHRDVENKLNLNGKDDINGNTSISIEVPD. Residues 38 to 58 form a helical membrane-spanning segment; that stretch reads GGYGWFILLAFILYNFSTWGA. Residues 59–83 lie on the Extracellular side of the membrane; that stretch reads NSGYAIYLAHYLENNTFAGGSKLDY. Residue Asn-72 is glycosylated (N-linked (GlcNAc...) asparagine). The helical transmembrane segment at 84–105 threads the bilayer; sequence ASIGGLAFSCGLFFAPVITWLY. Residues 106–111 lie on the Cytoplasmic side of the membrane; that stretch reads HIFSIQ. Residues 112-135 form a helical membrane-spanning segment; the sequence is FIIGLGILFQGAALLLAAFSVTLW. At 136–141 the chain is on the extracellular side; sequence EIYLTQ. Residues 142-163 form a helical membrane-spanning segment; sequence GVLIGFGLAFIFIPSVTLIPLW. At 164–169 the chain is on the cytoplasmic side; that stretch reads FRNKRS. Residues 170–186 traverse the membrane as a helical segment; that stretch reads LASGIGTAGSGLGGIVF. The Extracellular segment spans residues 187 to 200; it reads NLGMQSILQKRGVK. Residues 201–220 form a helical membrane-spanning segment; the sequence is WALIAQCIICTSLSTIALML. The Cytoplasmic segment spans residues 221–243; that stretch reads TRTTHQGLRQHKRSYKFELLDYD. The helical transmembrane segment at 244-268 threads the bilayer; it reads VLSNFAVWLLFGFVSFAMLGYVVLL. Residues 269-286 lie on the Extracellular side of the membrane; it reads YSLSDFTVSLGYTSKQGS. The helical transmembrane segment at 287–304 threads the bilayer; the sequence is YVSCMVSVGSLLGRPIVG. Topologically, residues 305 to 312 are cytoplasmic; the sequence is HIADKYGS. The chain crosses the membrane as a helical span at residues 313–332; it reads LTVGMILHLVMAILCWAMWI. The Extracellular segment spans residues 333–342; the sequence is PCKNLATAIA. A helical membrane pass occupies residues 343–362; the sequence is FGLLVGSIMGTIWPTIASIV. Residues 363–370 are Cytoplasmic-facing; sequence TRIVGLQK. Residues 371-394 form a helical membrane-spanning segment; the sequence is LPGTFGSTWIFMAAFALVAPIIGL. At 395–408 the chain is on the extracellular side; that stretch reads ELRSTDTNGNDYYR. The helical transmembrane segment at 409–433 threads the bilayer; it reads TAIFVGFAYFGVSLCQWLLRGFIIA. Topologically, residues 434–473 are cytoplasmic; the sequence is RDEIAVREAYSADQNELHLNVKLSHMSKCLFRYKQLPRRV.

The protein belongs to the major facilitator superfamily. Monocarboxylate porter (TC 2.A.1.13) family.

It is found in the membrane. Its function is as follows. Probable transporter. Does not act in the transport of monocarboxylic acids across the plasma membrane. The polypeptide is Probable transporter MCH2 (MCH2) (Saccharomyces cerevisiae (strain ATCC 204508 / S288c) (Baker's yeast)).